The sequence spans 569 residues: Isocitrate dehydrogenase kinase/phosphatase (569 aa).

Residues alanine 316–methionine 322 and lysine 337 contribute to the ATP site. Aspartate 372 is an active-site residue.

Belongs to the AceK family.

The protein localises to the cytoplasm. The catalysed reaction is L-seryl-[isocitrate dehydrogenase] + ATP = O-phospho-L-seryl-[isocitrate dehydrogenase] + ADP + H(+). Bifunctional enzyme which can phosphorylate or dephosphorylate isocitrate dehydrogenase (IDH) on a specific serine residue. This is a regulatory mechanism which enables bacteria to bypass the Krebs cycle via the glyoxylate shunt in response to the source of carbon. When bacteria are grown on glucose, IDH is fully active and unphosphorylated, but when grown on acetate or ethanol, the activity of IDH declines drastically concomitant with its phosphorylation. The protein is Isocitrate dehydrogenase kinase/phosphatase of Pseudomonas putida (strain W619).